The primary structure comprises 1150 residues: Pesticidal crystal protein Cry9Ea (1150 aa).

This sequence belongs to the delta endotoxin family.

In terms of biological role, promotes colloidosmotic lysis by binding to the midgut epithelial cells of insects. This chain is Pesticidal crystal protein Cry9Ea (cry9Ea), found in Bacillus thuringiensis subsp. aizawai.